A 250-amino-acid chain; its full sequence is Diaminopimelate epimerase (250 aa).

Residues Asn-11 and Asn-60 each contribute to the substrate site. Cys-69 (proton donor) is an active-site residue. Residues 70-71, Asn-164, and 182-183 contribute to the substrate site; these read GN and ER. Cys-192 acts as the Proton acceptor in catalysis. Substrate is bound at residue 193–194; that stretch reads GT.

It belongs to the diaminopimelate epimerase family. In terms of assembly, homodimer.

The protein resides in the cytoplasm. It carries out the reaction (2S,6S)-2,6-diaminopimelate = meso-2,6-diaminopimelate. The protein operates within amino-acid biosynthesis; L-lysine biosynthesis via DAP pathway; DL-2,6-diaminopimelate from LL-2,6-diaminopimelate: step 1/1. In terms of biological role, catalyzes the stereoinversion of LL-2,6-diaminopimelate (L,L-DAP) to meso-diaminopimelate (meso-DAP), a precursor of L-lysine and an essential component of the bacterial peptidoglycan. The chain is Diaminopimelate epimerase from Nitratiruptor sp. (strain SB155-2).